Here is a 501-residue protein sequence, read N- to C-terminus: MAASWRLHCNQPLLRYLLGFSSRRSLGLAQGAAAWPVDRGASWRWFHSTQLLQADPIKVLMPSLSPTMEQGNIVKWLRKEGEAVSAGDSLCEIETDKAVVTLDANDDGILAKIVVEEGAKNIQLGSLIALMVEEGEDWKQVEIPKDVSAPPPVSKPPAPTQPSPQPQIPCPARKEHKGTARFRLSPAARNILEKHSLDASQGTATGPRGIFTKEDALKLVELKQMGKITESRPASAPPPSLSASVPPQATAGPSYPRPMTPPVSIPGQPNAAGTFTEIPASNIRRVIAKRLTESKSTVPHAYATADCDLGAVLKVRRDLVKDDIKVSVNDFIIRAAAVTLKQMPGVNVTWDGEGPKQLPSVDISVAVATDKGLITPIIKDAAAKGIQEIADSVKVLSKKARDGKLMPEEYQGGSFSISNLGMFGIDEFAAVINPPQACILAVGRFRPVLKLTEDEEGNPQLQQHQLITVTMSSDSRVVDDELATRFLETFKANLENPMRLG.

Residues 1-53 constitute a mitochondrion transit peptide; it reads MAASWRLHCNQPLLRYLLGFSSRRSLGLAQGAAAWPVDRGASWRWFHSTQLLQ. The Lipoyl-binding domain occupies 56–132; that stretch reads PIKVLMPSLS…QLGSLIALMV (77 aa). Lysine 97 carries the post-translational modification N6-lipoyllysine. The disordered stretch occupies residues 145–176; that stretch reads KDVSAPPPVSKPPAPTQPSPQPQIPCPARKEH. Residues 149-169 show a composition bias toward pro residues; the sequence is APPPVSKPPAPTQPSPQPQIP. A Peripheral subunit-binding (PSBD) domain is found at 183–220; that stretch reads RLSPAARNILEKHSLDASQGTATGPRGIFTKEDALKLV. At lysine 194 the chain carries N6-acetyllysine. Phosphoserine is present on serine 196. The interval 228-256 is disordered; it reads ITESRPASAPPPSLSASVPPQATAGPSYP. Lysine 394 carries the post-translational modification N6-succinyllysine.

Belongs to the 2-oxoacid dehydrogenase family. In terms of assembly, part of the inner core of the multimeric pyruvate dehydrogenase complex that is composed of about 48 DLAT and 12 PDHX molecules. This core binds multiple copies of pyruvate dehydrogenase (subunits PDH1A and PDHB, E1), dihydrolipoamide acetyltransferase (DLAT, E2) and lipoamide dehydrogenase (DLD, E3). Interacts with SIRT4. Interacts with DLD. Delipoylated at Lys-97 by SIRT4, delipoylation decreases the PHD complex activity.

The protein localises to the mitochondrion matrix. In terms of biological role, required for anchoring dihydrolipoamide dehydrogenase (E3) to the dihydrolipoamide transacetylase (E2) core of the pyruvate dehydrogenase complexes of eukaryotes. This specific binding is essential for a functional PDH complex. The polypeptide is Pyruvate dehydrogenase protein X component, mitochondrial (Pdhx) (Mus musculus (Mouse)).